A 390-amino-acid polypeptide reads, in one-letter code: Digeranylgeranylglycerophospholipid reductase (390 aa).

FAD-binding residues include alanine 18, glutamate 37, cysteine 48, alanine 49, alanine 51, arginine 98, valine 122, aspartate 278, glycine 290, and isoleucine 291. Residue valine 368 participates in a 2,3-bis-O-(geranylgeranyl)-sn-glycerol 1-phospholipid binding.

It belongs to the geranylgeranyl reductase family. DGGGPL reductase subfamily. FAD is required as a cofactor.

The catalysed reaction is a 2,3-bis-O-phytanyl-sn-glycerol 1-phospholipid + 8 A = a 2,3-bis-O-(geranylgeranyl)-sn-glycerol 1-phospholipid + 8 AH2. It catalyses the reaction 2,3-bis-O-(phytanyl)-sn-glycerol 1-phosphate + 8 A = 2,3-bis-O-(geranylgeranyl)-sn-glycerol 1-phosphate + 8 AH2. It carries out the reaction CDP-2,3-bis-O-(geranylgeranyl)-sn-glycerol + 8 AH2 = CDP-2,3-bis-O-(phytanyl)-sn-glycerol + 8 A. The enzyme catalyses archaetidylserine + 8 AH2 = 2,3-bis-O-phytanyl-sn-glycero-3-phospho-L-serine + 8 A. Its pathway is membrane lipid metabolism; glycerophospholipid metabolism. Its function is as follows. Is involved in the reduction of 2,3-digeranylgeranylglycerophospholipids (unsaturated archaeols) into 2,3-diphytanylglycerophospholipids (saturated archaeols) in the biosynthesis of archaeal membrane lipids. Catalyzes the formation of archaetidic acid (2,3-di-O-phytanyl-sn-glyceryl phosphate) from 2,3-di-O-geranylgeranylglyceryl phosphate (DGGGP) via the hydrogenation of each double bond of the isoprenoid chains. Is also probably able to reduce double bonds of geranyl groups in CDP-2,3-bis-O-(geranylgeranyl)-sn-glycerol and archaetidylserine, thus acting at various stages in the biosynthesis of archaeal membrane lipids. The chain is Digeranylgeranylglycerophospholipid reductase from Methanococcus vannielii (strain ATCC 35089 / DSM 1224 / JCM 13029 / OCM 148 / SB).